Reading from the N-terminus, the 376-residue chain is Carbamoyl phosphate synthase small chain (376 aa).

The interval 1–181 (MSKAVLVLED…VEPDGPPGVS (181 aa)) is nucleophile. The segment at 1–183 (MSKAVLVLED…PDGPPGVSRF (183 aa)) is CPSase. Residues Ser46, Gly232, Gly234, Phe261, Gln264, Asn302, Gly304, and Phe305 each coordinate L-glutamine. Positions 184-376 (TVAALDLGIK…FVELMAGEGR (193 aa)) constitute a Glutamine amidotransferase type-1 domain. Residues His350 and Glu352 contribute to the active site.

The protein belongs to the CarA family. As to quaternary structure, composed of two chains; the small (or glutamine) chain promotes the hydrolysis of glutamine to ammonia, which is used by the large (or ammonia) chain to synthesize carbamoyl phosphate. Tetramer of heterodimers (alpha,beta)4.

The enzyme catalyses hydrogencarbonate + L-glutamine + 2 ATP + H2O = carbamoyl phosphate + L-glutamate + 2 ADP + phosphate + 2 H(+). It carries out the reaction L-glutamine + H2O = L-glutamate + NH4(+). The protein operates within amino-acid biosynthesis; L-arginine biosynthesis; carbamoyl phosphate from bicarbonate: step 1/1. It participates in pyrimidine metabolism; UMP biosynthesis via de novo pathway; (S)-dihydroorotate from bicarbonate: step 1/3. Its function is as follows. Small subunit of the glutamine-dependent carbamoyl phosphate synthetase (CPSase). CPSase catalyzes the formation of carbamoyl phosphate from the ammonia moiety of glutamine, carbonate, and phosphate donated by ATP, constituting the first step of 2 biosynthetic pathways, one leading to arginine and/or urea and the other to pyrimidine nucleotides. The small subunit (glutamine amidotransferase) binds and cleaves glutamine to supply the large subunit with the substrate ammonia. This Mycobacterium tuberculosis (strain CDC 1551 / Oshkosh) protein is Carbamoyl phosphate synthase small chain.